Here is a 249-residue protein sequence, read N- to C-terminus: 2,3-bisphosphoglycerate-dependent phosphoglycerate mutase (249 aa).

Substrate is bound by residues 10–17 (RHGESEWN), 23–24 (TG), Arg62, 89–92 (ERHY), Lys100, 116–117 (RR), and 185–186 (GN). The active-site Tele-phosphohistidine intermediate is His11. Glu89 functions as the Proton donor/acceptor in the catalytic mechanism.

This sequence belongs to the phosphoglycerate mutase family. BPG-dependent PGAM subfamily. In terms of assembly, homodimer.

It carries out the reaction (2R)-2-phosphoglycerate = (2R)-3-phosphoglycerate. The protein operates within carbohydrate degradation; glycolysis; pyruvate from D-glyceraldehyde 3-phosphate: step 3/5. Its function is as follows. Catalyzes the interconversion of 2-phosphoglycerate and 3-phosphoglycerate. The polypeptide is 2,3-bisphosphoglycerate-dependent phosphoglycerate mutase (Hamiltonella defensa subsp. Acyrthosiphon pisum (strain 5AT)).